The sequence spans 315 residues: Small ribosomal subunit protein uS9m (315 aa).

A mitochondrion-targeting transit peptide spans 1-42; the sequence is MMASLRHSITSALRSSRQGCSKSAQWQSLDQQFGALRISSRS. The disordered stretch occupies residues 293–315; sequence PRKVERKKHGHVKARKMPTWVKR. The span at 296 to 315 shows a compositional bias: basic residues; sequence VERKKHGHVKARKMPTWVKR.

Belongs to the universal ribosomal protein uS9 family. Component of the mitochondrial small ribosomal subunit (mt-SSU). Mature N.crassa 74S mitochondrial ribosomes consist of a small (37S) and a large (54S) subunit. The 37S small subunit contains a 16S ribosomal RNA (16S mt-rRNA) and 32 different proteins. The 54S large subunit contains a 23S rRNA (23S mt-rRNA) and 42 different proteins.

It is found in the mitochondrion. In terms of biological role, component of the mitochondrial ribosome (mitoribosome), a dedicated translation machinery responsible for the synthesis of mitochondrial genome-encoded proteins, including at least some of the essential transmembrane subunits of the mitochondrial respiratory chain. The mitoribosomes are attached to the mitochondrial inner membrane and translation products are cotranslationally integrated into the membrane. This chain is Small ribosomal subunit protein uS9m (mrp-9), found in Neurospora crassa (strain ATCC 24698 / 74-OR23-1A / CBS 708.71 / DSM 1257 / FGSC 987).